Consider the following 600-residue polypeptide: UvrABC system protein C (600 aa).

The GIY-YIG domain maps to 15–100 (NSAGVYQYFN…IKQLHPKYNI (86 aa)). One can recognise a UVR domain in the interval 203–238 (SVLLKNLEKQMLVLAQNENYEEAAKVRDQIAMIKDL).

This sequence belongs to the UvrC family. In terms of assembly, interacts with UvrB in an incision complex.

The protein localises to the cytoplasm. Functionally, the UvrABC repair system catalyzes the recognition and processing of DNA lesions. UvrC both incises the 5' and 3' sides of the lesion. The N-terminal half is responsible for the 3' incision and the C-terminal half is responsible for the 5' incision. The polypeptide is UvrABC system protein C (Campylobacter jejuni (strain RM1221)).